The sequence spans 235 residues: Dephospho-CoA kinase (235 aa).

The DPCK domain occupies 15-219 (NVGLTGSISC…KKERLQRKSA (205 aa)). Residue 23–28 (SCGKST) coordinates ATP.

Belongs to the CoaE family.

Its subcellular location is the cytoplasm. The catalysed reaction is 3'-dephospho-CoA + ATP = ADP + CoA + H(+). It functions in the pathway cofactor biosynthesis; coenzyme A biosynthesis; CoA from (R)-pantothenate: step 5/5. Its function is as follows. Catalyzes the phosphorylation of the 3'-hydroxyl group of dephosphocoenzyme A to form coenzyme A. The sequence is that of Dephospho-CoA kinase from Syntrophus aciditrophicus (strain SB).